Consider the following 996-residue polypeptide: Conserved oligomeric Golgi complex subunit 7 (996 aa).

Disordered stretches follow at residues 533–571, 828–867, and 950–974; these read TPSSINGEVDPVKKLTNSHTRSHSRSGSGSGNSNSNSVG, QQQEQQEKEQQQEKEQQDADQDININTNNNNENDENDEDD, and QLHNNNNNNNNNNGNSNNNNNNTNN. Low complexity predominate over residues 557–571; it reads RSGSGSGNSNSNSVG. A compositionally biased stretch (basic and acidic residues) spans 828-844; sequence QQQEQQEKEQQQEKEQQ. Low complexity-rich tracts occupy residues 849–858 and 953–974; these read DININTNNNN and NNNNNNNNNNGNSNNNNNNTNN.

The protein belongs to the COG7 family. As to quaternary structure, component of the conserved oligomeric Golgi complex which is composed of eight different subunits and is required for normal Golgi morphology and localization.

It localises to the golgi apparatus membrane. In terms of biological role, required for normal Golgi function. This chain is Conserved oligomeric Golgi complex subunit 7 (cog7), found in Dictyostelium discoideum (Social amoeba).